Reading from the N-terminus, the 164-residue chain is Zinc finger protein ZAT8 (164 aa).

C2H2-type zinc fingers lie at residues F37–H59 and H85–H107.

It localises to the nucleus. Functionally, probable transcription factor that may be involved in stress responses. This chain is Zinc finger protein ZAT8 (ZAT8), found in Arabidopsis thaliana (Mouse-ear cress).